Here is a 399-residue protein sequence, read N- to C-terminus: Chromosomal replication initiator protein DnaA (399 aa).

The domain I, interacts with DnaA modulators stretch occupies residues 1–64 (MELNALIKKI…EEEVRKLIEV (64 aa)). Residues 64-77 (VKEKEEKKKVEIKD) are domain II. A domain III, AAA+ region region spans residues 78–290 (FLNPKYTLEN…GKIKLIKLKG (213 aa)). The ADP site is built by isoleucine 89, asparagine 94, glycine 122, threonine 123, glycine 124, lysine 125, threonine 126, and histidine 127. Isoleucine 89 is a binding site for ATP. ATP is bound at residue glycine 122. Positions 124, 125, 126, and 127 each coordinate ATP. Threonine 126 contacts Mg(2+). Valine 156 serves as a coordination point for ssDNA. Aspartate 180 lines the ATP pocket. Aspartate 181 contributes to the Mg(2+) binding site. SsDNA is bound by residues lysine 188, arginine 190, and threonine 191. Arginine 277 is a binding site for ATP. The segment at 291–399 (FEGLERKERK…LEKQAFDKIC (109 aa)) is domain IV, binds dsDNA.

This sequence belongs to the DnaA family. In the presence of ATP analog AMP-PCP forms a linear, right-handed spiral filament with 4 subunits arranged head-to-tail, about 122 Angstroms wide and about 360 Angstroms long. Mg(2+)-AMP-PCP binds at the subunit interface with the gamma phosphate coordinated by adjacent subunits. dsDNA probably wraps on the outside of the filament. ssDNA binds to the center of the helical filament via the AAA+ domain, which stretches the DNA.

The protein resides in the cytoplasm. In terms of biological role, plays an essential role in the initiation and regulation of chromosomal replication. ATP-DnaA binds to the origin of replication (oriC) to initiate formation of the DNA replication initiation complex once per cell cycle. Binds the DnaA box (a 9 base pair repeat at the origin) and separates the double-stranded (ds)DNA. Forms a right-handed helical filament on oriC DNA; dsDNA binds to the exterior of the filament while single-stranded (ss)DNA is stabiized in the filament's interior. The ATP-DnaA-oriC complex binds and stabilizes one strand of the AT-rich DNA unwinding element (DUE), permitting loading of DNA polymerase. After initiation quickly degrades to an ADP-DnaA complex that is not apt for DNA replication. Binds acidic phospholipids. Its function is as follows. Able to melt short unstable dsDNA (15-mer with melting temperature, TM, 43 degrees Celsius) in the presence of a non-hydrolyzable ATP analog; a more stable dsDNA (20-mer, TM 55 degrees Celsius) is poor substrate. ADP does not support dsDNA melting. Addition of DnaA-AMP-PCP (an ATP analog, beta,gamma-methyleneadenosine 5'-triphosphate) to an oric-containing plasmid causes a DNA shift to more positively supercoiled topological species, stabilizing a positive wrap and right-handed filament as seen in the crystal structure without DNA. Filament formation generated by positive supercoiling may destabilize the origin unwinding element through compensatory negative supercoiling strain. This is Chromosomal replication initiator protein DnaA from Aquifex aeolicus (strain VF5).